The sequence spans 138 residues: Small ribosomal subunit protein bS6 (138 aa).

The segment at 94–138 is disordered; sequence VKQDGPLPTPKPTSKENEPEKEEVKPTEEKTESPSKDEKKEDSKE. Residues 106 to 138 are compositionally biased toward basic and acidic residues; that stretch reads TSKENEPEKEEVKPTEEKTESPSKDEKKEDSKE.

This sequence belongs to the bacterial ribosomal protein bS6 family.

Binds together with bS18 to 16S ribosomal RNA. This is Small ribosomal subunit protein bS6 from Prochlorococcus marinus (strain NATL2A).